A 176-amino-acid chain; its full sequence is Ribosome maturation factor RimM (176 aa).

A PRC barrel domain is found at 99-173; the sequence is ADEYYWHDLL…TMTITPLEGL (75 aa).

The protein belongs to the RimM family. Binds ribosomal protein uS19.

It is found in the cytoplasm. Functionally, an accessory protein needed during the final step in the assembly of 30S ribosomal subunit, possibly for assembly of the head region. Essential for efficient processing of 16S rRNA. May be needed both before and after RbfA during the maturation of 16S rRNA. It has affinity for free ribosomal 30S subunits but not for 70S ribosomes. The chain is Ribosome maturation factor RimM from Trichlorobacter lovleyi (strain ATCC BAA-1151 / DSM 17278 / SZ) (Geobacter lovleyi).